A 100-amino-acid chain; its full sequence is Urease subunit gamma (100 aa).

It belongs to the urease gamma subunit family. As to quaternary structure, heterotrimer of UreA (gamma), UreB (beta) and UreC (alpha) subunits. Three heterotrimers associate to form the active enzyme.

The protein resides in the cytoplasm. It carries out the reaction urea + 2 H2O + H(+) = hydrogencarbonate + 2 NH4(+). Its pathway is nitrogen metabolism; urea degradation; CO(2) and NH(3) from urea (urease route): step 1/1. The protein is Urease subunit gamma of Yersinia aldovae.